A 221-amino-acid polypeptide reads, in one-letter code: Large ribosomal subunit protein uL3 (221 aa).

The protein belongs to the universal ribosomal protein uL3 family. In terms of assembly, part of the 50S ribosomal subunit. Forms a cluster with proteins L14 and L19.

In terms of biological role, one of the primary rRNA binding proteins, it binds directly near the 3'-end of the 23S rRNA, where it nucleates assembly of the 50S subunit. This chain is Large ribosomal subunit protein uL3, found in Chlamydia trachomatis serovar L2 (strain ATCC VR-902B / DSM 19102 / 434/Bu).